We begin with the raw amino-acid sequence, 252 residues long: Small ribosomal subunit protein uS2 (252 aa).

The protein belongs to the universal ribosomal protein uS2 family. Component of the small ribosomal subunit. Mature ribosomes consist of a small (40S) and a large (60S) subunit. The 40S subunit contains about 33 different proteins and 1 molecule of RNA (18S). The 60S subunit contains about 49 different proteins and 3 molecules of RNA (25S, 5.8S and 5S). Interacts with RPS21.

The protein resides in the cytoplasm. Its function is as follows. Required for the assembly and/or stability of the 40S ribosomal subunit. Required for the processing of the 20S rRNA-precursor to mature 18S rRNA in a late step of the maturation of 40S ribosomal subunits. The protein is Small ribosomal subunit protein uS2 of Encephalitozoon cuniculi (strain GB-M1) (Microsporidian parasite).